We begin with the raw amino-acid sequence, 302 residues long: Acetylglutamate kinase (302 aa).

Substrate is bound by residues 73-74, Arg-95, and Asn-200; that span reads GG.

Belongs to the acetylglutamate kinase family. ArgB subfamily.

It is found in the cytoplasm. The enzyme catalyses N-acetyl-L-glutamate + ATP = N-acetyl-L-glutamyl 5-phosphate + ADP. The protein operates within amino-acid biosynthesis; L-arginine biosynthesis; N(2)-acetyl-L-ornithine from L-glutamate: step 2/4. Catalyzes the ATP-dependent phosphorylation of N-acetyl-L-glutamate. This Sphingopyxis alaskensis (strain DSM 13593 / LMG 18877 / RB2256) (Sphingomonas alaskensis) protein is Acetylglutamate kinase.